Here is a 154-residue protein sequence, read N- to C-terminus: SsrA-binding protein (154 aa).

Positions 132 to 154 are disordered; it reads KRESIKKRQDKRDMERALKRGAE.

The protein belongs to the SmpB family.

Its subcellular location is the cytoplasm. Required for rescue of stalled ribosomes mediated by trans-translation. Binds to transfer-messenger RNA (tmRNA), required for stable association of tmRNA with ribosomes. tmRNA and SmpB together mimic tRNA shape, replacing the anticodon stem-loop with SmpB. tmRNA is encoded by the ssrA gene; the 2 termini fold to resemble tRNA(Ala) and it encodes a 'tag peptide', a short internal open reading frame. During trans-translation Ala-aminoacylated tmRNA acts like a tRNA, entering the A-site of stalled ribosomes, displacing the stalled mRNA. The ribosome then switches to translate the ORF on the tmRNA; the nascent peptide is terminated with the 'tag peptide' encoded by the tmRNA and targeted for degradation. The ribosome is freed to recommence translation, which seems to be the essential function of trans-translation. The chain is SsrA-binding protein from Acaryochloris marina (strain MBIC 11017).